The primary structure comprises 193 residues: Orotate phosphoribosyltransferase (193 aa).

117–125 (EDVVTTGLS) is a 5-phospho-alpha-D-ribose 1-diphosphate binding site. Residues threonine 121 and arginine 149 each contribute to the orotate site.

Belongs to the purine/pyrimidine phosphoribosyltransferase family. PyrE subfamily. Homodimer. Requires Mg(2+) as cofactor.

The catalysed reaction is orotidine 5'-phosphate + diphosphate = orotate + 5-phospho-alpha-D-ribose 1-diphosphate. It functions in the pathway pyrimidine metabolism; UMP biosynthesis via de novo pathway; UMP from orotate: step 1/2. Functionally, catalyzes the transfer of a ribosyl phosphate group from 5-phosphoribose 1-diphosphate to orotate, leading to the formation of orotidine monophosphate (OMP). This Erythrobacter litoralis (strain HTCC2594) protein is Orotate phosphoribosyltransferase.